Reading from the N-terminus, the 185-residue chain is Hypoxanthine/guanine phosphoribosyltransferase (185 aa).

This sequence belongs to the purine/pyrimidine phosphoribosyltransferase family. Archaeal HPRT subfamily. As to quaternary structure, homodimer.

The protein localises to the cytoplasm. It catalyses the reaction IMP + diphosphate = hypoxanthine + 5-phospho-alpha-D-ribose 1-diphosphate. The enzyme catalyses GMP + diphosphate = guanine + 5-phospho-alpha-D-ribose 1-diphosphate. The protein operates within purine metabolism; IMP biosynthesis via salvage pathway; IMP from hypoxanthine: step 1/1. Catalyzes a salvage reaction resulting in the formation of IMP that is energically less costly than de novo synthesis. This chain is Hypoxanthine/guanine phosphoribosyltransferase, found in Methanococcus maripaludis (strain C7 / ATCC BAA-1331).